A 325-amino-acid chain; its full sequence is tRNA(Ile)-lysidine synthase (325 aa).

Position 34 to 39 (34 to 39) interacts with ATP; it reads SGGADS.

The protein belongs to the tRNA(Ile)-lysidine synthase family.

Its subcellular location is the cytoplasm. It carries out the reaction cytidine(34) in tRNA(Ile2) + L-lysine + ATP = lysidine(34) in tRNA(Ile2) + AMP + diphosphate + H(+). Ligates lysine onto the cytidine present at position 34 of the AUA codon-specific tRNA(Ile) that contains the anticodon CAU, in an ATP-dependent manner. Cytidine is converted to lysidine, thus changing the amino acid specificity of the tRNA from methionine to isoleucine. This chain is tRNA(Ile)-lysidine synthase, found in Rhodococcus opacus (strain B4).